We begin with the raw amino-acid sequence, 260 residues long: Snake venom serine protease 2B (260 aa).

The first 18 residues, 1–18 (MVLIRVLANLLILQLSYA), serve as a signal peptide directing secretion. A propeptide spanning residues 19–24 (QKSSEL) is cleaved from the precursor. One can recognise a Peptidase S1 domain in the interval 25–251 (VVGGDECNIN…HLDWIQSIIA (227 aa)). 6 disulfide bridges follow: Cys-31/Cys-165, Cys-52/Cys-68, Cys-102/Cys-258, Cys-144/Cys-212, Cys-176/Cys-191, and Cys-202/Cys-227. His-67 (charge relay system) is an active-site residue. 2 N-linked (GlcNAc...) asparagine glycosylation sites follow: Asn-101 and Asn-105. Asp-112 acts as the Charge relay system in catalysis. N-linked (GlcNAc...) asparagine glycosylation is found at Asn-123 and Asn-156. The active-site Charge relay system is Ser-206.

This sequence belongs to the peptidase S1 family. Snake venom subfamily. In terms of assembly, monomer. In terms of tissue distribution, expressed by the venom gland.

The protein localises to the secreted. Snake venom serine protease that may act in the hemostasis system of the prey. The protein is Snake venom serine protease 2B (TLG2B) of Craspedocephalus gramineus (Bamboo pit viper).